The chain runs to 267 residues: Protein BMH1 (267 aa).

Serine 2 carries the N-acetylserine modification. A Glycyl lysine isopeptide (Lys-Gly) (interchain with G-Cter in ubiquitin) cross-link involves residue lysine 76. The residue at position 89 (serine 89) is a Phosphoserine. Residues 236 to 267 (DMSESGQAEDQQQQQQHQQQQPPAAAEGEAPK) form a disordered region. Over residues 243-267 (AEDQQQQQQHQQQQPPAAAEGEAPK) the composition is skewed to low complexity.

The protein belongs to the 14-3-3 family. As to quaternary structure, homodimer. Interacts with NTH1 (via N-terminus when phosphorylated by PKA); the interaction is direct and activates NTH1. Interacts with FIN1.

Its function is as follows. Involved in growth regulation. This chain is Protein BMH1 (BMH1), found in Saccharomyces cerevisiae (strain ATCC 204508 / S288c) (Baker's yeast).